A 277-amino-acid chain; its full sequence is NH(3)-dependent NAD(+) synthetase (277 aa).

An ATP-binding site is contributed by 36-43; that stretch reads GLSGGIDS. Residue D42 participates in Mg(2+) binding. R118 serves as a coordination point for deamido-NAD(+). Position 138 (T138) interacts with ATP. Mg(2+) is bound at residue E143. ATP is bound by residues K167 and S189.

It belongs to the NAD synthetase family. In terms of assembly, homodimer.

It catalyses the reaction deamido-NAD(+) + NH4(+) + ATP = AMP + diphosphate + NAD(+) + H(+). Its pathway is cofactor biosynthesis; NAD(+) biosynthesis; NAD(+) from deamido-NAD(+) (ammonia route): step 1/1. Catalyzes the ATP-dependent amidation of deamido-NAD to form NAD. Uses ammonia as a nitrogen source. This Pelodictyon phaeoclathratiforme (strain DSM 5477 / BU-1) protein is NH(3)-dependent NAD(+) synthetase.